Here is a 1495-residue protein sequence, read N- to C-terminus: DNA-directed RNA polymerase subunit 1 (1495 aa).

It belongs to the RNA polymerase beta' chain family.

It is found in the virion. It catalyses the reaction RNA(n) + a ribonucleoside 5'-triphosphate = RNA(n+1) + diphosphate. DNA-dependent RNA polymerase catalyzes the transcription of DNA into RNA using the four ribonucleoside triphosphates as substrates. The protein is DNA-directed RNA polymerase subunit 1 (RPO1) of Acanthamoeba polyphaga (Amoeba).